A 131-amino-acid polypeptide reads, in one-letter code: Small ribosomal subunit protein uS8 (131 aa).

Belongs to the universal ribosomal protein uS8 family. In terms of assembly, part of the 30S ribosomal subunit. Contacts proteins S5 and S12.

One of the primary rRNA binding proteins, it binds directly to 16S rRNA central domain where it helps coordinate assembly of the platform of the 30S subunit. This chain is Small ribosomal subunit protein uS8, found in Laribacter hongkongensis (strain HLHK9).